Reading from the N-terminus, the 352-residue chain is C-X-C chemokine receptor type 4 (352 aa).

Residues 1–21 (MEGISIYTSDNYTEEMGSGDY) form an important for chemokine binding and signaling region. At 1–38 (MEGISIYTSDNYTEEMGSGDYDSMKEPCFREENANFNK) the chain is on the extracellular side. At Tyr-7 the chain carries Sulfotyrosine. N-linked (GlcNAc...) asparagine glycosylation is present at Asn-11. The residue at position 12 (Tyr-12) is a Sulfotyrosine. Ser-18 is a glycosylation site (O-linked (Xyl...) (chondroitin sulfate) serine). A Sulfotyrosine modification is found at Tyr-21. 2 disulfide bridges follow: Cys-28–Cys-274 and Cys-109–Cys-186. Residues 39 to 63 (IFLPTIYSIIFLTGIVGNGLVILVM) form a helical membrane-spanning segment. Over 64 to 77 (GYQKKLRSMTDKYR) the chain is Cytoplasmic. Residues 78 to 99 (LHLSVADLLFVITLPFWAVDAV) traverse the membrane as a helical segment. The segment at 94–97 (WAVD) is chemokine binding. The Extracellular segment spans residues 100-110 (ANWYFGNFLCK). The helical transmembrane segment at 111–130 (AVHVIYTVNLYSSVLILAFI) threads the bilayer. The tract at residues 113 to 117 (HVIYT) is chemokine binding. Over 131–154 (SLDRYLAIVHATNSQRPRKLLAEK) the chain is Cytoplasmic. The Important for signaling motif lies at 133 to 135 (DRY). The interval 135-147 (YLAIVHATNSQRP) is involved in dimerization; when bound to chemokine. Residues 155–174 (VVYVGVWIPALLLTIPDFIF) traverse the membrane as a helical segment. Topologically, residues 175-195 (ANVSEADDRYICDRFYPNDLW) are extracellular. The segment at 186–190 (CDRFY) is chemokine binding, important for signaling. The interval 191 to 210 (PNDLWVVVFQFQHIMVGLIL) is involved in dimerization. Residues 196 to 216 (VVVFQFQHIMVGLILPGIVIL) traverse the membrane as a helical segment. The Cytoplasmic portion of the chain corresponds to 217-241 (SCYCIIISKLSHSKGHQKRKALKTT). The chain crosses the membrane as a helical span at residues 242-261 (VILILAFFACWLPYYIGISI). Residues 262–282 (DSFILLEIIKQGCEFENTVHK) are Extracellular-facing. Residues 266 to 268 (LLE) are involved in dimerization. Residues 283–302 (WISITEALAFFHCCLNPILY) traverse the membrane as a helical segment. Residues 303-352 (AFLGAKFKTSAQHALTSVSRGSSLKILSKGKRGGHSSVSTESESSSFHSS) are Cytoplasmic-facing. Residues Ser-319 and Ser-321 each carry the phosphoserine modification. A phosphoserine; by PKC and GRK6 mark is found at Ser-324 and Ser-325. Positions 329-352 (LSKGKRGGHSSVSTESESSSFHSS) are disordered. Residue Ser-330 is modified to Phosphoserine; by GRK6. Lys-331 is covalently cross-linked (Glycyl lysine isopeptide (Lys-Gly) (interchain with G-Cter in ubiquitin)). Low complexity predominate over residues 337–352 (HSSVSTESESSSFHSS). Ser-339 carries the phosphoserine; by GRK6 modification. 2 positions are modified to phosphoserine: Ser-348 and Ser-351.

Belongs to the G-protein coupled receptor 1 family. In terms of assembly, monomer. Can form homodimers. Interacts with CD164. Interacts with ARRB2; the interaction is dependent on the C-terminal phosphorylation of CXCR4 and allows activation of MAPK1 and MAPK3. Interacts with ARR3; the interaction is dependent on the C-terminal phosphorylation of CXCR4 and modulates calcium mobilization. Interacts with RNF113A; the interaction, enhanced by CXCL12, promotes CXCR4 ubiquitination and subsequent degradation. Interacts (via the cytoplasmic C-terminal) with ITCH (via the WW domains I and II); the interaction, enhanced by CXCL12, promotes CXCR4 ubiquitination and leads to its degradation. Interacts with extracellular ubiquitin. Interacts with DBN1; this interaction is enhanced by antigenic stimulation. Following LPS binding, may form a complex with GDF5, HSP90AA1 and HSPA8. Post-translationally, phosphorylated on agonist stimulation. Rapidly phosphorylated on serine and threonine residues in the C-terminal. Phosphorylation at Ser-324 and Ser-325 leads to recruitment of ITCH, ubiquitination and protein degradation. Ubiquitinated after ligand binding, leading to its degradation. Ubiquitinated by ITCH at the cell membrane on agonist stimulation. The ubiquitin-dependent mechanism, endosomal sorting complex required for transport (ESCRT), then targets CXCR4 for lysosomal degradation. This process is dependent also on prior Ser-/Thr-phosphorylation in the C-terminal of CXCR4. Also binding of ARRB1 to STAM negatively regulates CXCR4 sorting to lysosomes though modulating ubiquitination of SFR5S. In terms of processing, sulfation is required for efficient binding of CXCL12/SDF-1alpha and promotes its dimerization. Post-translationally, O- and N-glycosylated. N-glycosylation can mask coreceptor function. The O-glycosylation chondroitin sulfate attachment does not affect interaction with CXCL12/SDF-1alpha nor its coreceptor activity.

The protein localises to the cell membrane. Its subcellular location is the cell junction. It is found in the early endosome. The protein resides in the late endosome. It localises to the lysosome. In terms of biological role, receptor for the C-X-C chemokine CXCL12/SDF-1 that transduces a signal by increasing intracellular calcium ion levels and enhancing MAPK1/MAPK3 activation. Involved in the AKT signaling cascade. Plays a role in regulation of cell migration, e.g. during wound healing. Acts as a receptor for extracellular ubiquitin; leading to enhanced intracellular calcium ions and reduced cellular cAMP levels. Binds bacterial lipopolysaccharide (LPS) et mediates LPS-induced inflammatory response, including TNF secretion by monocytes. Involved in hematopoiesis and in cardiac ventricular septum formation. Also plays an essential role in vascularization of the gastrointestinal tract, probably by regulating vascular branching and/or remodeling processes in endothelial cells. Involved in cerebellar development. In the CNS, could mediate hippocampal-neuron survival. This is C-X-C chemokine receptor type 4 (CXCR4) from Pan troglodytes (Chimpanzee).